Consider the following 62-residue polypeptide: Conotoxin Im11.9 (62 aa).

Positions 1–22 (MFRVTSVLLVIVLLNLVVLTNA) are cleaved as a signal peptide. 4 cysteine pairs are disulfide-bonded: C23–C33, C27–C38, C32–C41, and C37–C46. Positions 23–49 (CHMDCSKMTCCSGICCFYCGRPMCPGT) are excised as a propeptide.

Belongs to the conotoxin I2 superfamily. As to expression, expressed by the venom duct.

It localises to the secreted. In terms of biological role, probable neurotoxin. This is Conotoxin Im11.9 from Conus imperialis (Imperial cone).